Consider the following 472-residue polypeptide: Serine/threonine-protein kinase ULK3 (472 aa).

A Protein kinase domain is found at 14–270 (FILTERLGSG…FQDFFAHPWV (257 aa)). ATP-binding positions include 20–28 (LGSGTYATV) and lysine 44. Aspartate 137 acts as the Proton acceptor in catalysis. The residue at position 176 (serine 176) is a Phosphoserine. An MIT 1 domain is found at 280–348 (SLGRATALVV…SRAEELKAIV (69 aa)). Residues serine 300, serine 350, serine 384, and serine 464 each carry the phosphoserine; by autocatalysis modification. The MIT 2 domain maps to 375–444 (RLLAALEVAS…ARAEYLKEQV (70 aa)).

It belongs to the protein kinase superfamily. Ser/Thr protein kinase family. APG1/unc-51/ULK1 subfamily. Interacts (via protein kinase domain) with SUFU. Post-translationally, autophosphorylated. Autophosphorylation is blocked by interaction with SUFU. In terms of tissue distribution, widely expressed. Highest levels observed in fetal brain. In adult tissues, high levels in brain, liver and kidney, moderate levels in testis and adrenal gland and low levels in heart, lung, stomach, thymus, prostate and placenta. In the brain, highest expression in the hippocampus, high levels also detected in the cerebellum, olfactory bulb and optic nerve. In the central nervous system, lowest levels in the spinal cord.

The protein resides in the cytoplasm. The catalysed reaction is L-seryl-[protein] + ATP = O-phospho-L-seryl-[protein] + ADP + H(+). It carries out the reaction L-threonyl-[protein] + ATP = O-phospho-L-threonyl-[protein] + ADP + H(+). Its function is as follows. Serine/threonine protein kinase that acts as a regulator of Sonic hedgehog (SHH) signaling and autophagy. Acts as a negative regulator of SHH signaling in the absence of SHH ligand: interacts with SUFU, thereby inactivating the protein kinase activity and preventing phosphorylation of GLI proteins (GLI1, GLI2 and/or GLI3). Positively regulates SHH signaling in the presence of SHH: dissociates from SUFU, autophosphorylates and mediates phosphorylation of GLI2, activating it and promoting its nuclear translocation. Phosphorylates in vitro GLI2, as well as GLI1 and GLI3, although less efficiently. Also acts as a regulator of autophagy: following cellular senescence, able to induce autophagy. This chain is Serine/threonine-protein kinase ULK3 (ULK3), found in Homo sapiens (Human).